The sequence spans 976 residues: MAELEHLGGKRAESARARRAEQLRRWRGSLTEQEPAERQGAGRQLQTRRGSPRVRFEDGAVFLAACSSGDTDEVKKLLARGADINTVNVDGLTALHQACIDENLDMVKFLVENRANVNQQDNEGWTPLHAAASCGYLNIAEYFISHGASVGIVNSEGEVPSDLAEEPAMKDLLLEQVKKQGVDLEQSRKEEEQQMLQDARQWLNSGRIEDVRQARSGATALHVAAAKGYSEVLRLLIQAGYELNVQDHDGWTPLHAAAHWGVKEACSILAEALCDMDIRNKLGQTPFDVADEGLVEHLEMLQKKQDVLRSEKETRNKLIESDLNSKFQSGLFKNKEKMLYEEEIPKSQDTEEENKESSSSSSEEEEGEDEVSESETEKEADKKPEATVNHSNSEIKSRIMEQIPAPAQNTFSASSARRLSSLFNKAEEPKDESPSSWRLGLRKTGSHNMLSEVANSREALRDRGSSIYRSSSSPRISALLDDKDKERENKSYFSMLVPRRLSSTSDIEEKENRESAVNLVRSGSHTRQLWRDEAKGSETPQTIAPSTYTSTYLKRTPYKSQADSTAEKTADSVSSSTPLCVITNRPAPSTANGVPAATVFSSAGTDPSVEAREKRRSYLTPVRDEEAESLRKARSRQARQTRRSTQGVTLTDLQEAEKTFSRSRAERQAQEQPGEKLEDPGGLEGSTKKQEPSAAPTKGAGEGRSLEEEPIYHRLRYPTQPDKPTTPVSPSASRPSLYTGSHLLRTSRASGPDSENSETSTHATAAKEMDTSEKGEADLDDQSSNRLSVRERRRAKDRRRGTGINFWTNDEDETDVSEEVKEALHERLSRLESGGTNPTSSDSYSDRASARARREAREARLASLTSRVEEDSNRDYKKLYESALTENQKLKTKLQEAQLELADIKAKLEKMAQQKQEKTSDRSSVLEVEKRERRALERKMSEMEEEMKVLTELKSDNQRLKDENGALIRVISKLSK.

A compositionally biased stretch (basic and acidic residues) spans 1–24 (MAELEHLGGKRAESARARRAEQLR). A disordered region spans residues 1–52 (MAELEHLGGKRAESARARRAEQLRRWRGSLTEQEPAERQGAGRQLQTRRGSP). At Ser-29 the chain carries Phosphoserine. 5 ANK repeats span residues 57 to 86 (EDGA…DINT), 90 to 119 (DGLT…NVNQ), 123 to 152 (EGWT…SVGI), 216 to 245 (SGAT…ELNV), and 249 to 278 (DGWT…DMDI). Residues 342–489 (EEIPKSQDTE…LDDKDKEREN (148 aa)) form a disordered region. A compositionally biased stretch (acidic residues) spans 362 to 374 (SEEEEGEDEVSES). Residues 375-385 (ETEKEADKKPE) are compositionally biased toward basic and acidic residues. A compositionally biased stretch (low complexity) spans 411–423 (FSASSARRLSSLF). Position 444 is a phosphothreonine (Thr-444). Residues 465 to 477 (SSIYRSSSSPRIS) show a composition bias toward low complexity. A compositionally biased stretch (basic and acidic residues) spans 480–489 (LDDKDKEREN). Ser-502 is modified (phosphoserine). Residues 503–873 (STSDIEEKEN…LTSRVEEDSN (371 aa)) form a disordered region. The span at 538-564 (ETPQTIAPSTYTSTYLKRTPYKSQADS) shows a compositional bias: polar residues. Basic and acidic residues predominate over residues 622 to 631 (VRDEEAESLR). Over residues 632 to 642 (KARSRQARQTR) the composition is skewed to basic residues. Thr-645 bears the Phosphothreonine mark. Residues 655–679 (EAEKTFSRSRAERQAQEQPGEKLED) show a composition bias toward basic and acidic residues. 2 stretches are compositionally biased toward polar residues: residues 722–739 (DKPT…SLYT) and 747–763 (SRAS…STHA). A compositionally biased stretch (basic and acidic residues) spans 765 to 777 (AAKEMDTSEKGEA). Over residues 791 to 801 (ERRRAKDRRRG) the composition is skewed to basic residues. A Phosphothreonine modification is found at Thr-802. Residues 818-830 (EEVKEALHERLSR) show a composition bias toward basic and acidic residues. The residue at position 833 (Ser-833) is a Phosphoserine. Over residues 844–860 (YSDRASARARREAREAR) the composition is skewed to basic and acidic residues. A Phosphoserine modification is found at Ser-941.

PP1 comprises a catalytic subunit, PPP1CA, PPP1CB or PPP1CC, and one or several targeting or regulatory subunits. PPP1R12B mediates binding to myosin. Isoform 3 and isoform 4 bind PPP1R12A, but not isoform 1 of PPP1R12B itself. Binds IL16.

The protein resides in the cytoplasm. It localises to the cytoskeleton. Its subcellular location is the stress fiber. Regulates myosin phosphatase activity. Augments Ca(2+) sensitivity of the contractile apparatus. The protein is Protein phosphatase 1 regulatory subunit 12B (Ppp1r12b) of Mus musculus (Mouse).